Reading from the N-terminus, the 254-residue chain is Small ribosomal subunit protein uS2 (254 aa).

The segment at Asp228–Glu254 is disordered. Residues Glu240–Glu254 are compositionally biased toward low complexity.

This sequence belongs to the universal ribosomal protein uS2 family.

The sequence is that of Small ribosomal subunit protein uS2 from Flavobacterium johnsoniae (strain ATCC 17061 / DSM 2064 / JCM 8514 / BCRC 14874 / CCUG 350202 / NBRC 14942 / NCIMB 11054 / UW101) (Cytophaga johnsonae).